Consider the following 505-residue polypeptide: L-carnitine/gamma-butyrobetaine antiporter (505 aa).

A run of 12 helical transmembrane segments spans residues 10–30 (IEPKVFFPLLIIVGILCWLTV), 51–71 (WGWAFEWYMVVMLFSWFWLVF), 92–112 (IFMMFASCTSAAVLFWGSIEI), 143–163 (GPLPWATYSFLSVAFAYFFFV), 195–215 (FYLVALIFAMGTSLGLATPLV), 231–251 (LDAIIITCWIILNAICVACGL), 263–283 (SYLSFLMLGWVFIVSGASFIM), 316–336 (WTVFYWAWWVIYAIQMSIFLA), 347–367 (LCFGMVMGLTASTWILWTVLG), 403–423 (LSTATMWGFFILCFIATVTLI), 446–466 (LLVRIGWSVLVGIIGIVLLAL), and 475–495 (AIIAGGCPLFFVNIMVTLSFI).

The protein belongs to the BCCT transporter (TC 2.A.15) family. CaiT subfamily. In terms of assembly, homotrimer.

The protein localises to the cell inner membrane. It catalyses the reaction 4-(trimethylamino)butanoate(in) + (R)-carnitine(out) = 4-(trimethylamino)butanoate(out) + (R)-carnitine(in). The protein operates within amine and polyamine metabolism; carnitine metabolism. In terms of biological role, catalyzes the exchange of L-carnitine for gamma-butyrobetaine. In Salmonella typhi, this protein is L-carnitine/gamma-butyrobetaine antiporter.